A 210-amino-acid polypeptide reads, in one-letter code: Somatotropin (210 aa).

A signal peptide spans Met-1–Ala-22. Residue His-38 participates in Zn(2+) binding. A disulfide bridge connects residues Cys-71 and Cys-183. Glu-192 provides a ligand contact to Zn(2+). A disulfide bridge connects residues Cys-200 and Cys-208.

It belongs to the somatotropin/prolactin family.

Its subcellular location is the secreted. Growth hormone plays an important role in growth control and is involved in the regulation of several anabolic processes. Implicated as an osmoregulatory substance important for seawater adaptation. The chain is Somatotropin (gh) from Oncorhynchus keta (Chum salmon).